Reading from the N-terminus, the 629-residue chain is Polyadenylate-binding protein 2 (629 aa).

The segment covering 1–12 (MAQVQLQGQTPN) has biased composition (polar residues). The segment at 1-25 (MAQVQLQGQTPNGSTAAVTSAPATS) is disordered. A compositionally biased stretch (low complexity) spans 13 to 25 (GSTAAVTSAPATS). RRM domains are found at residues 36-114 (TSLY…YSHR), 124-201 (GNIF…PFLR), 215-292 (TNVY…RAQK), and 318-395 (SNLY…IAQR). Residues 480 to 507 (PQQQRPGGGRRPGGIQHSQQQNPMMQQQ) form a disordered region. The span at 492 to 507 (GGIQHSQQQNPMMQQQ) shows a compositional bias: low complexity. The region spanning 539 to 616 (TIGALASNLS…AMDVLRSVAA (78 aa)) is the PABC domain.

The protein belongs to the polyadenylate-binding protein type-1 family. In terms of assembly, interacts with eIF-iso4G. Interacts with ERD15/CID1 and CID7. Interacts with Turnip mosaic virus (TuMV) VPg-Pro and RNA-dependent RNA polymerase (RdRp). As to expression, expressed in all organs (at the protein level) but under distinct spatial and temporal regulation within each organ.

The protein resides in the cytoplasm. The protein localises to the nucleus. In terms of biological role, binds the poly(A) tail of mRNA. Appears to be an important mediator of the multiple roles of the poly(A) tail in mRNA biogenesis, stability and translation. In the cytoplasm, affects both translation and mRNA decay. Stimulates translation by interaction with translation initiation factor eIF4G, a subunit of the cap-binding complex eIF4F, bringing the 5'- and 3'-ends of the mRNA in proximity. The formation of this circular mRNP structure appears to be critical for the synergistic effects of the cap and the poly(A) tail in facilitating translation initiation, recycling of ribosomes, and mRNA stability. During infection with potyvirus TuMV, acts as a potential integral component of the viral replicase complex that could play an important role in the regulation of potyviral RNA-dependent RNA polymerase (RdRp). Binds to uridylated mRNAs and determines the size of uridine extensions. Limits uridine extension by URT1, likely by binding to the oligo(A) tail and preventing URT1 access. The sequence is that of Polyadenylate-binding protein 2 (PAB2) from Arabidopsis thaliana (Mouse-ear cress).